Here is a 367-residue protein sequence, read N- to C-terminus: Zinc transport system membrane protein TroD (367 aa).

A run of 9 helical transmembrane segments spans residues 5–25 (VVLI…FLVL), 28–48 (ISLM…LGYF), 56–76 (FVPF…AELL), 87–107 (AVGL…SLYA), 140–160 (SLVQ…LFFK), 170–190 (VLAT…MLAV), 201–221 (VGAV…LLLT), 224–244 (LLLM…SGLF), and 251–271 (GSIA…VYLF).

This sequence belongs to the ABC-3 integral membrane protein family.

The protein resides in the cell membrane. Functionally, part of an ATP-driven transport system TroABCD for zinc. The chain is Zinc transport system membrane protein TroD (troD) from Treponema pallidum (strain Nichols).